Consider the following 345-residue polypeptide: D-fructose 1,6-bisphosphatase class 2/sedoheptulose 1,7-bisphosphatase (345 aa).

Positions 33, 57, 97, and 100 each coordinate Mn(2+). Substrate contacts are provided by residues 100–102, Y131, 176–178, and 198–200; these read EGT, RPR, and DGD. Residue E225 participates in Mn(2+) binding.

It belongs to the FBPase class 2 family. Homotetramer. It depends on Mn(2+) as a cofactor.

It carries out the reaction beta-D-fructose 1,6-bisphosphate + H2O = beta-D-fructose 6-phosphate + phosphate. The enzyme catalyses D-sedoheptulose 1,7-bisphosphate + H2O = D-sedoheptulose 7-phosphate + phosphate. Its pathway is carbohydrate biosynthesis; Calvin cycle. In terms of biological role, catalyzes the hydrolysis of fructose 1,6-bisphosphate (Fru 1,6-P2) and sedoheptulose 1,7-bisphosphate (Sed 1,7-P2) to fructose 6-phosphate and sedoheptulose 7-phosphate, respectively. In Crocosphaera subtropica (strain ATCC 51142 / BH68) (Cyanothece sp. (strain ATCC 51142)), this protein is D-fructose 1,6-bisphosphatase class 2/sedoheptulose 1,7-bisphosphatase.